Consider the following 512-residue polypeptide: Glycerol kinase 2 (512 aa).

T18 contacts ADP. Residues T18, T19, and S20 each contribute to the ATP site. Position 18 (T18) interacts with sn-glycerol 3-phosphate. R22 provides a ligand contact to ADP. Sn-glycerol 3-phosphate-binding residues include R88, E89, Y140, and D255. Residues R88, E89, Y140, D255, and Q256 each contribute to the glycerol site. T277 and G321 together coordinate ADP. ATP-binding residues include T277, G321, Q325, and G422. G422 and N426 together coordinate ADP.

This sequence belongs to the FGGY kinase family.

It catalyses the reaction glycerol + ATP = sn-glycerol 3-phosphate + ADP + H(+). It functions in the pathway polyol metabolism; glycerol degradation via glycerol kinase pathway; sn-glycerol 3-phosphate from glycerol: step 1/1. Inhibited by fructose 1,6-bisphosphate (FBP). In terms of biological role, key enzyme in the regulation of glycerol uptake and metabolism. Catalyzes the phosphorylation of glycerol to yield sn-glycerol 3-phosphate. The polypeptide is Glycerol kinase 2 (Streptomyces coelicolor (strain ATCC BAA-471 / A3(2) / M145)).